Here is a 159-residue protein sequence, read N- to C-terminus: Ribosomal RNA large subunit methyltransferase H (159 aa).

An S-adenosyl-L-methionine-binding site is contributed by G108.

The protein belongs to the RNA methyltransferase RlmH family. In terms of assembly, homodimer.

The protein resides in the cytoplasm. The catalysed reaction is pseudouridine(1915) in 23S rRNA + S-adenosyl-L-methionine = N(3)-methylpseudouridine(1915) in 23S rRNA + S-adenosyl-L-homocysteine + H(+). In terms of biological role, specifically methylates the pseudouridine at position 1915 (m3Psi1915) in 23S rRNA. This chain is Ribosomal RNA large subunit methyltransferase H, found in Lactobacillus gasseri (strain ATCC 33323 / DSM 20243 / BCRC 14619 / CIP 102991 / JCM 1131 / KCTC 3163 / NCIMB 11718 / NCTC 13722 / AM63).